The sequence spans 312 residues: Putative olfactory receptor 1F2 (312 aa).

Over 1-25 (MERDKPVSVSEFLLLGLSRQPQQQH) the chain is Extracellular. Residues 26 to 49 (LLFVFFLSMYLATVLGNLLIILAI) traverse the membrane as a helical segment. Residues 50–57 (SIDSRLHT) lie on the Cytoplasmic side of the membrane. A helical membrane pass occupies residues 58–78 (PMYFFLSNMSFVDNCFSTTVP). At 79 to 99 (KMLANHILRTQTISFSGCLMQ) the chain is on the extracellular side. A disulfide bond links Cys96 and Cys188. The helical transmembrane segment at 100–119 (MYFISELADMDNFLLAVMAY) threads the bilayer. Residues 120 to 138 (DRFVAVCRPLHYTAKMIHQ) lie on the Cytoplasmic side of the membrane. Residues 139-157 (LCALLVTGSWVVANSNALL) form a helical membrane-spanning segment. Residues 158–195 (HTLLMARLSFCADNTIPHIFCDVTPLLKLSCSDTHLSE) lie on the Extracellular side of the membrane. The helical transmembrane segment at 196-218 (VMILTEAALVTITPFLCLLASYM) threads the bilayer. Topologically, residues 219-235 (HITCVVLRVPSTKGRWK) are cytoplasmic. The helical transmembrane segment at 236-258 (AFSTCGSHLAVVLLFYGTIMSPY) threads the bilayer. The Extracellular portion of the chain corresponds to 259–271 (FRTSSSHSAQRDI). The helical transmembrane segment at 272 to 291 (AAAVRFTVVTPVMNPLIYSL) threads the bilayer. Topologically, residues 292-312 (RNKDIKGALVKVVAVKFFSVQ) are cytoplasmic.

The protein belongs to the G-protein coupled receptor 1 family.

The protein localises to the cell membrane. Odorant receptor. In Homo sapiens (Human), this protein is Putative olfactory receptor 1F2 (OR1F2P).